A 432-amino-acid polypeptide reads, in one-letter code: Calcium uptake protein 2, mitochondrial (432 aa).

Residues 1-22 (MAAAAGRSAWLAAWGGRLRRGL) constitute a mitochondrion transit peptide. Positions 169 to 204 (KPHSGFHVAFKMLDVDGNEMIERKEFVKLQKIISKQ) constitute an EF-hand 1 domain. Residues D182, D184, N186, M188, E190, and E193 each coordinate Ca(2+). Phosphoserine is present on S202. The region spanning 224–259 (EPGVNTTLQVRFFGKRGEKKLHYKEFRRFMENLQTE) is the EF-hand 2; degenerate domain. The region spanning 290 to 325 (TENKDIYWRNVREKLSVGESISLDEFKSFCHFTTHL) is the EF-hand 3; degenerate domain. The EF-hand 4 domain occupies 359 to 394 (LSDNLLDTVFKIFDLDGDECLSHGEFLGVLKNRMHR). 5 residues coordinate Ca(2+): D372, D374, D376, C378, and E383.

The protein belongs to the MICU1 family. MICU2 subfamily. Heterodimer; disulfide-linked; heterodimerizes with MICU1. Component of the uniplex complex, composed of MCU, EMRE/SMDT1, MICU1 and MICU2 in a 4:4:1:1 stoichiometry. As to expression, predominantly expressed in stomach, intestine, skeletal muscle, kidney, heart, testis, prostate and uterus.

The protein resides in the mitochondrion intermembrane space. It localises to the mitochondrion inner membrane. Its function is as follows. Calcium sensor of the mitochondrial calcium uniporter (MCU) channel, which senses calcium level via its EF-hand domains. MICU1 and MICU2 form a disulfide-linked heterodimer that stimulates and inhibits MCU activity, depending on the concentration of calcium. At low calcium levels, MICU1 occludes the pore of the MCU channel, preventing mitochondrial calcium uptake. At higher calcium levels, calcium-binding to MICU1 and MICU2 induces a conformational change that weakens MCU-MICU1 interactions and moves the MICU1-MICU2 heterodimer away from the pore, allowing calcium permeation through the MCU channel. The sequence is that of Calcium uptake protein 2, mitochondrial from Mus musculus (Mouse).